Reading from the N-terminus, the 190-residue chain is HTH-type transcriptional repressor CutR (190 aa).

Residues 3 to 58 (PINRQQHILKWLKEEGSLRISDISARFGVSEMTVYRDVNQLVQSNQVIKTAGGITL) form the HTH deoR-type domain. Positions 20-39 (LRISDISARFGVSEMTVYRD) form a DNA-binding region, H-T-H motif.

It is found in the cytoplasm. In terms of biological role, may act as a negative transcriptional regulator of cutJ/ycnJ in the presence of copper. May use copper as a corepressor. This Bacillus subtilis (strain 168) protein is HTH-type transcriptional repressor CutR.